Here is a 342-residue protein sequence, read N- to C-terminus: Anthranilate phosphoribosyltransferase (342 aa).

Residues Gly90, 93 to 94 (GD), Thr98, 100 to 103 (NIST), 118 to 126 (KHGNRSVSS), and Ala130 contribute to the 5-phospho-alpha-D-ribose 1-diphosphate site. Gly90 contacts anthranilate. Ser102 is a binding site for Mg(2+). Asn121 contacts anthranilate. An anthranilate-binding site is contributed by Arg176. Residues Asp234 and Glu235 each coordinate Mg(2+).

It belongs to the anthranilate phosphoribosyltransferase family. In terms of assembly, homodimer. The cofactor is Mg(2+).

It carries out the reaction N-(5-phospho-beta-D-ribosyl)anthranilate + diphosphate = 5-phospho-alpha-D-ribose 1-diphosphate + anthranilate. Its pathway is amino-acid biosynthesis; L-tryptophan biosynthesis; L-tryptophan from chorismate: step 2/5. Functionally, catalyzes the transfer of the phosphoribosyl group of 5-phosphorylribose-1-pyrophosphate (PRPP) to anthranilate to yield N-(5'-phosphoribosyl)-anthranilate (PRA). The chain is Anthranilate phosphoribosyltransferase from Mannheimia succiniciproducens (strain KCTC 0769BP / MBEL55E).